Here is a 446-residue protein sequence, read N- to C-terminus: Exodeoxyribonuclease 7 large subunit (446 aa).

It belongs to the XseA family. Heterooligomer composed of large and small subunits.

The protein resides in the cytoplasm. The enzyme catalyses Exonucleolytic cleavage in either 5'- to 3'- or 3'- to 5'-direction to yield nucleoside 5'-phosphates.. Functionally, bidirectionally degrades single-stranded DNA into large acid-insoluble oligonucleotides, which are then degraded further into small acid-soluble oligonucleotides. In Streptococcus pyogenes serotype M49 (strain NZ131), this protein is Exodeoxyribonuclease 7 large subunit.